The primary structure comprises 626 residues: Receptor-like protein 4 (626 aa).

The signal sequence occupies residues 1-22 (MMLRFILASLLLSSFSLYSSLA). Over 23 to 549 (RPAPYALRIS…CGPHLSSGAK (527 aa)) the chain is Extracellular. Residues Asn61, Asn282, Asn333, and Asn417 are each glycosylated (N-linked (GlcNAc...) asparagine). 4 LRR repeats span residues 420–444 (RWFIDGLDLDNQGLKGFLPNDISKL), 445–468 (KHLQSINLSENNIRGGIPASLGSV), 470–492 (SLEVLDLSYNSFNGSIPETLGEL), and 493–516 (TSLRILNLNGNSLSGKVPAAVGGR). N-linked (GlcNAc...) asparagine glycosylation is found at Asn451 and Asn482. N-linked (GlcNAc...) asparagine glycosylation occurs at Asn524. Residues 550–570 (IGIAFGVSLAFLLIVACAMIW) traverse the membrane as a helical segment. Residues 571–626 (WKRRQNILRAQQIAARGAPYAKKRTHVSHDIQMSRHGHNNHGQARTAVENGPSLLS) lie on the Cytoplasmic side of the membrane. Positions 603–626 (MSRHGHNNHGQARTAVENGPSLLS) are disordered.

Belongs to the RLP family.

The protein localises to the cell membrane. This Arabidopsis thaliana (Mouse-ear cress) protein is Receptor-like protein 4.